The sequence spans 70 residues: DNA-directed RNA polymerase subunit epsilon (70 aa).

It belongs to the RNA polymerase subunit epsilon family. In terms of assembly, RNAP is composed of a core of 2 alpha, a beta and a beta' subunit. The core is associated with a delta subunit, and at least one of epsilon or omega. When a sigma factor is associated with the core the holoenzyme is formed, which can initiate transcription.

It carries out the reaction RNA(n) + a ribonucleoside 5'-triphosphate = RNA(n+1) + diphosphate. In terms of biological role, a non-essential component of RNA polymerase (RNAP). The protein is DNA-directed RNA polymerase subunit epsilon of Limosilactobacillus reuteri (strain DSM 20016) (Lactobacillus reuteri).